The following is a 676-amino-acid chain: MEDLNIKLNAHFAGKVVRKDLTKKIKEGANVPVYVLEYLLGMYCATDDEKSMNDGVQMVKKILSDNFVRPDEAEKVKSKVKELGKYTVIDKIGVKLNDKKDIYEAEFSNLGLNGVPISSHYVKEFDKLLAGGIWCIVKMEYYFDEESKGTSPFSIESVTPIQMPNMDLEEMFEQRRQFSKEEWIDVLIRSTGMEPTQLEDTVKWHLLERMVPLVENNYNLCELGPRGTGKSHIYKEISPNSILVSGGQTTVANLFYNMSTRKIGLVGMWDTVAFDEVAGITFKDKDGIQIMKDYMASGSFARGREEKNASASMVFVGNINQSVDVLLKTSHLFDPFPEAMAYDSAFFDRMHYYLPGWEIPKMRPEFFTNEYGFITDYLAEFLREMRKRSFSDAIDKYFRLGNNLNQRDVIAVRKTVSGLIKLLYPNGEYIKEDVEEVLRYALIGRRRVKEQLKKIGGMEFYDVNFSYIDNESMNEEFVSVPEQGGGTLIPEGMNKPGHIYTVARGKTGMIGTYKLETEVVSGNGKFEKTGLNSDRDAKESIDTAFRFFKANNKNISGTISTTTKDYLMHIQDIHGVGLTGELSLAAFIALCSGALNKPVQSQMVVLGSISISGTINKVEELANVLQVCFDSGAKKILLPMVSAVDIPTVPPELFAKFQIGFYQSAEDAVFKALGVE.

The protein belongs to the BrxL family.

Its function is as follows. BREX systems (bacteriophage exclusion) provide immunity against bacteriophage. Part of a type 1 BREX system. This system allows phage adsorption but prevents phage DNA replication, without degradation of the phage DNA. Methylation of bacterial DNA by PglX probably guides self/non-self discrimination. When the brxA-brxB-brxC-pglX and pglZ-brxL operons are transformed into a susceptible B.subtilis strain (BEST7003) they confer resistance to bacteriophages SPbeta, SP16, Zeta, phi3T and SP02 and partial protection to phages SP01 and SP82G (these include lytic and temperate phage). They do not protect against phages phi105, rho10 or rho14. Additionally confers a very slight reduction in efficiency of plasmid transformation. In Bacillus cereus (strain H3081.97), this protein is Lon-like protease BrxL.